We begin with the raw amino-acid sequence, 147 residues long: Hemoglobin subunit beta (147 aa).

Residue Val2 is modified to N-acetylvaline. Residues 3–147 (HLSAEEKGLV…VATALAHKYH (145 aa)) form the Globin domain. Thr13 is subject to Phosphothreonine. Ser45 carries the post-translational modification Phosphoserine. Lys60 is modified (N6-acetyllysine). His64 contacts heme b. The residue at position 83 (Lys83) is an N6-acetyllysine. His93 provides a ligand contact to heme b. At Cys94 the chain carries S-nitrosocysteine. Lys145 bears the N6-acetyllysine mark.

The protein belongs to the globin family. Heterotetramer of two alpha chains and two beta chains. Red blood cells.

Functionally, involved in oxygen transport from the lung to the various peripheral tissues. The chain is Hemoglobin subunit beta (HBB) from Scapanus orarius (Coast mole).